The following is a 113-amino-acid chain: uncharacterized protein (113 aa).

This is an uncharacterized protein from Schizosaccharomyces pombe (strain 972 / ATCC 24843) (Fission yeast).